The chain runs to 185 residues: Protein GrpE (185 aa).

Positions 1–12 (MADEQLNEKDLN) are enriched in basic and acidic residues. A disordered region spans residues 1–22 (MADEQLNEKDLNVEETGAGNAA).

Belongs to the GrpE family. As to quaternary structure, homodimer.

The protein localises to the cytoplasm. In terms of biological role, participates actively in the response to hyperosmotic and heat shock by preventing the aggregation of stress-denatured proteins, in association with DnaK and GrpE. It is the nucleotide exchange factor for DnaK and may function as a thermosensor. Unfolded proteins bind initially to DnaJ; upon interaction with the DnaJ-bound protein, DnaK hydrolyzes its bound ATP, resulting in the formation of a stable complex. GrpE releases ADP from DnaK; ATP binding to DnaK triggers the release of the substrate protein, thus completing the reaction cycle. Several rounds of ATP-dependent interactions between DnaJ, DnaK and GrpE are required for fully efficient folding. The sequence is that of Protein GrpE from Pseudomonas putida (strain ATCC 700007 / DSM 6899 / JCM 31910 / BCRC 17059 / LMG 24140 / F1).